Here is a 141-residue protein sequence, read N- to C-terminus: Nucleoside diphosphate kinase (141 aa).

Residues Lys11, Phe59, Arg87, Thr93, Arg104, and Asn114 each contribute to the ATP site. His117 functions as the Pros-phosphohistidine intermediate in the catalytic mechanism.

Belongs to the NDK family. As to quaternary structure, homotetramer. The cofactor is Mg(2+).

Its subcellular location is the cytoplasm. It catalyses the reaction a 2'-deoxyribonucleoside 5'-diphosphate + ATP = a 2'-deoxyribonucleoside 5'-triphosphate + ADP. The enzyme catalyses a ribonucleoside 5'-diphosphate + ATP = a ribonucleoside 5'-triphosphate + ADP. Major role in the synthesis of nucleoside triphosphates other than ATP. The ATP gamma phosphate is transferred to the NDP beta phosphate via a ping-pong mechanism, using a phosphorylated active-site intermediate. This chain is Nucleoside diphosphate kinase, found in Paraburkholderia phytofirmans (strain DSM 17436 / LMG 22146 / PsJN) (Burkholderia phytofirmans).